The sequence spans 249 residues: ATP synthase subunit a, chloroplastic (249 aa).

The next 5 helical transmembrane spans lie at 40–60 (QVLI…VLAV), 97–117 (VPFI…GALL), 136–156 (INTT…AGLS), 201–221 (LVVV…VMFL), and 222–242 (GLFT…AYIG).

It belongs to the ATPase A chain family. F-type ATPases have 2 components, CF(1) - the catalytic core - and CF(0) - the membrane proton channel. CF(1) has five subunits: alpha(3), beta(3), gamma(1), delta(1), epsilon(1). CF(0) has four main subunits: a, b, b' and c.

The protein resides in the plastid. It localises to the chloroplast thylakoid membrane. In terms of biological role, key component of the proton channel; it plays a direct role in the translocation of protons across the membrane. In Arabis hirsuta (Hairy rock-cress), this protein is ATP synthase subunit a, chloroplastic.